We begin with the raw amino-acid sequence, 276 residues long: Undecaprenyl-diphosphatase (276 aa).

A run of 8 helical transmembrane segments spans residues 1 to 21 (MELYQGVVLGVLQGLTEFLPV), 40 to 60 (ALSFDISVHLGTLFAVALVFF), 93 to 113 (VRLAALIIVGSIPTAVIGLIL), 120 to 140 (LFSSLVIVGSMLMVTGTFLWL), 154 to 174 (IGFGTALFIGVCQGVAVIPGI), 199 to 219 (FLLSMPAIAGAEILSLKESFA), 227 to 247 (VTLLSTLTAFIVGTLALVALL), and 255 to 275 (FYLFAPYCWVVGLISIIAGFV).

Belongs to the UppP family.

It localises to the cell inner membrane. The catalysed reaction is di-trans,octa-cis-undecaprenyl diphosphate + H2O = di-trans,octa-cis-undecaprenyl phosphate + phosphate + H(+). Functionally, catalyzes the dephosphorylation of undecaprenyl diphosphate (UPP). Confers resistance to bacitracin. In Desulforapulum autotrophicum (strain ATCC 43914 / DSM 3382 / VKM B-1955 / HRM2) (Desulfobacterium autotrophicum), this protein is Undecaprenyl-diphosphatase.